Consider the following 455-residue polypeptide: N(6)-adenosine-methyltransferase non-catalytic subunit METTL14 (455 aa).

Positions 21–96 are disordered; the sequence is QQLGAESPDS…QHQEESGPYE (76 aa). The segment covering 37–51 has biased composition (basic and acidic residues); it reads SKDEQKEIEETRETC. Residues 69–82 are compositionally biased toward acidic residues; the sequence is EGEDPEEDVEEQKE. Interaction with METTL3 stretches follow at residues 134 to 135 and 236 to 237; these read RD and SG. Residues 244–253 form a positively charged region required for RNA-binding region; the sequence is RMCLRKWGFR. Interaction with METTL3 regions lie at residues 254–257 and 277–286; these read RCED and KAVFQRTKEH. The tract at residues 296–297 is positively charged region required for RNA-binding; it reads RR. An interaction with METTL3 region spans residues 307–311; that stretch reads NVDID. A disordered region spans residues 392–455; the sequence is ERLRPKSPPP…GGPHRGFPPR (64 aa). The segment covering 407–421 has biased composition (gly residues); that stretch reads RGGGAPRGGRGGPAA. The segment covering 423 to 441 has biased composition (basic and acidic residues); that stretch reads RGDRGRERNRPNFRGDRGG.

It belongs to the MT-A70-like family. In terms of assembly, heterodimer; heterodimerizes with mettl3 to form an antiparallel heterodimer that constitutes an active methyltransferase. Component of the WMM complex, a N6-methyltransferase complex composed of a catalytic subcomplex, named MAC, and of an associated subcomplex, named MACOM. The MAC subcomplex is composed of mettl3 and mettl14.

The protein resides in the nucleus. In terms of biological role, the METTL3-METTL14 heterodimer forms a N6-methyltransferase complex that methylates adenosine residues at the N(6) position of some mRNAs and regulates the circadian clock, differentiation of embryonic stem cells and cortical neurogenesis. In the heterodimer formed with mettl3, mettl14 constitutes the RNA-binding scaffold that recognizes the substrate rather than the catalytic core. N6-methyladenosine (m6A), which takes place at the 5'-[AG]GAC-3' consensus sites of some mRNAs, plays a role in mRNA stability and processing. The polypeptide is N(6)-adenosine-methyltransferase non-catalytic subunit METTL14 (mettl14) (Danio rerio (Zebrafish)).